Reading from the N-terminus, the 123-residue chain is MPTIQQLIRNKRQPIENRTKSPALKGCPQRRGVCTRVYTTTPKKPNSALRKIARVRLTSGFEITAYIPGIGHNLQEHSVVLVRGGRVKDLPGVRYHIIRGTLDAVGVKDRQQGRSKYGVKKSK.

It belongs to the universal ribosomal protein uS12 family. As to quaternary structure, part of the 30S ribosomal subunit.

The protein localises to the plastid. The protein resides in the chloroplast. Functionally, with S4 and S5 plays an important role in translational accuracy. Located at the interface of the 30S and 50S subunits. The protein is Small ribosomal subunit protein uS12c (rps12) of Marchantia polymorpha (Common liverwort).